The chain runs to 662 residues: MPPFYYRRRWYSNPWRRKRLRFRRRRLRRPIRKRFRRRRWVRRRRFFRFKRKLRKIRIDQWQPETIRKCHVKGNLCLLTCGRGNINHNYILTSESYVPTSEPGGGSWSILQMTTRVLYDEYKAARNWWTKSNSLLPLTKYIRCKLKFYRSDQTDYIVTIQRTGPFEVTLESYLSTQPSRHLMNHKAFIVPKLGRGPNKETYVKKIVRPPALFQSKWYFSQDIYNTPLFILTVSSCSLDQMYAPQDQISTNISLFSLNTNVFQINNWHKQPYTTKAASTLETYLYCYHNGHEPTQELKWKDIILLGNMTNYTDGKKYNTSGTTPLDLFKTENKPYWGNVFTNLNQDQDVIIYYGTKPKQDDNWTSTAPILPITSLYVECRYNPFKDKGTGNKVYLVPTDSGLGSFLTLPTKSELIITDLPLWLITWGWIEWLKKSRPVAHIEEEYQVVIQSKYIHPQLPCYVLIDKYFRHPPEGQHYITELSETDKLHWHPKYSMQTEQLELIAETGPAAPKINNTKQIEAHLNYDFLFKWGGSPAPMETITDPAEQEKFPSPSNQLQGLQIESPGKPKQYYLYTFDEKRSELTMPAAKRLKKDFTTPTFFTDFGTKDIPLKTQEETDQISEDEEIETSLPKEDHLKQQLQRTRQYYREGIRKLLKTKKLFPL.

Belongs to the anelloviridae capsid protein family.

The protein resides in the virion. Self-assembles to form an icosahedral capsid with a T=1 symmetry, about 30 nm in diameter, and consisting of 60 capsid proteins. The capsid encapsulates the genomic DNA. Capsid protein is involved in attachment and entry into the host cell. This chain is Capsid protein, found in Homo sapiens (Human).